The primary structure comprises 471 residues: Argininosuccinate lyase (471 aa).

Belongs to the lyase 1 family. Argininosuccinate lyase subfamily.

Its subcellular location is the cytoplasm. It catalyses the reaction 2-(N(omega)-L-arginino)succinate = fumarate + L-arginine. Its pathway is amino-acid biosynthesis; L-arginine biosynthesis; L-arginine from L-ornithine and carbamoyl phosphate: step 3/3. The sequence is that of Argininosuccinate lyase from Ehrlichia canis (strain Jake).